A 235-amino-acid chain; its full sequence is MTRPVIVALDLDNEKKLNELLPKLGKPENVFIKIGMELFFNEGPAIVRNLSRQGYQIFLDLKMSDIPNTVYNGAKALAQLGITYTTVHALGGSQMIKAAKEGLIAGTPVGKNIPKLLAVTELTSISDDILHEEQNCNLSMNQQVLSLAETAKKAGADGVICSPLEVKNLRQNVGDDFLYVTPGIRPAGNAKDDQSRVATPAQAKEWGSTAIVVGRPITLATNPEAAYEAIKKEFN.

Substrate-binding positions include aspartate 10, lysine 33, 60 to 69 (DLKMSDIPNT), threonine 123, arginine 185, glutamine 194, glycine 214, and arginine 215. Residue lysine 62 is the Proton donor of the active site.

Belongs to the OMP decarboxylase family. Type 1 subfamily. In terms of assembly, homodimer.

The enzyme catalyses orotidine 5'-phosphate + H(+) = UMP + CO2. It participates in pyrimidine metabolism; UMP biosynthesis via de novo pathway; UMP from orotate: step 2/2. Its function is as follows. Catalyzes the decarboxylation of orotidine 5'-monophosphate (OMP) to uridine 5'-monophosphate (UMP). The polypeptide is Orotidine 5'-phosphate decarboxylase (Lactobacillus gasseri (strain ATCC 33323 / DSM 20243 / BCRC 14619 / CIP 102991 / JCM 1131 / KCTC 3163 / NCIMB 11718 / NCTC 13722 / AM63)).